Here is a 401-residue protein sequence, read N- to C-terminus: MDLTQQAKDIQNITVQETNKNNSESIECSKITMDLKFNNSRKYISITVPSKTQTMSPHIKSVDDVVVLGMNLSKFNKLTQFFICVAGVFVFYLIYGYLQELIFSVEGFKSCGWYLTLVQFAFYSIFGLIELQLIQDKRRRIPGKTYMIIAFLTVGTMGLSNTSLGYLNYPTQVIFKCCKLIPVMLGGVFIQGKRYNVADVSAAICMSLGLIWFTLADSTTAPNFNLTGVVLISLALCADAVIGNVQEKAMKLHNASNSEMVLYSYSIGFVYILLGLTCTSGLGPAVTFCAKNPVRTYGYAFLFSLTGYFGISFVLALIKIFGALIAVTVTTGRKAMTIVLSFIFFAKPFTFQYVWSGLLVVLGIFLNVYSKNMDKIRLPSLYDLINKSVEARKSRTLAQTV.

N-linked (GlcNAc...) asparagine glycans are attached at residues asparagine 12 and asparagine 71. The next 6 membrane-spanning stretches (helical) occupy residues 78 to 98, 114 to 134, 147 to 167, 170 to 190, 196 to 216, and 223 to 243; these read LTQF…YGYL, YLTL…LQLI, MIIA…LGYL, PTQV…GVFI, NVAD…FTLA, and NFNL…AVIG. The N-linked (GlcNAc...) asparagine glycan is linked to asparagine 254. 4 helical membrane-spanning segments follow: residues 267 to 287, 298 to 317, 324 to 346, and 349 to 369; these read IGFV…PAVT, GYAF…VLAL, LIAV…IFFA, and FTFQ…LNVY.

Belongs to the nucleotide-sugar transporter family. SLC35B subfamily. As to expression, preferentially and highly expressed in colon.

Its subcellular location is the golgi apparatus membrane. It carries out the reaction 3'-phosphoadenylyl sulfate(in) + adenosine 3',5'-bisphosphate(out) = 3'-phosphoadenylyl sulfate(out) + adenosine 3',5'-bisphosphate(in). Probably functions as a 3'-phosphoadenylyl sulfate:adenosine 3',5'-bisphosphate antiporter at the Golgi membranes. Mediates the transport from the cytosol into the lumen of the Golgi of 3'-phosphoadenylyl sulfate/adenosine 3'-phospho 5'-phosphosulfate (PAPS), a universal sulfuryl donor for sulfation events that take place in that compartment. This is Adenosine 3'-phospho 5'-phosphosulfate transporter 2 from Homo sapiens (Human).